Here is a 136-residue protein sequence, read N- to C-terminus: Small ribosomal subunit protein uS9 (136 aa).

The segment at S97–R136 is disordered. Basic and acidic residues predominate over residues P98–A116. A compositionally biased stretch (basic residues) spans K117–R136.

Belongs to the universal ribosomal protein uS9 family.

This Prochlorococcus marinus (strain MIT 9301) protein is Small ribosomal subunit protein uS9.